The primary structure comprises 910 residues: Coatomer subunit beta'-2 (910 aa).

WD repeat units follow at residues 13–52, 55–94, 97–136, 140–180, 183–224, 227–266, 269–309, 351–393, and 461–501; these read QRSE…MVKS, VTEL…KVKV, AHTD…MCTQ, GHSH…PNFT, GHSK…CVQT, GHAH…LENT, YGLE…ASMD, TCDL…GSAL, and RIDV…SHLD. A disordered region spans residues 882–910; sequence ADGSTDGAVLVNGNDTEEQWGTNNEESSA. Polar residues predominate over residues 900–910; that stretch reads QWGTNNEESSA.

This sequence belongs to the WD repeat COPB2 family. As to quaternary structure, oligomeric complex that consists of at least the alpha, beta, beta', gamma, delta, epsilon and zeta subunits.

It localises to the cytoplasm. Its subcellular location is the golgi apparatus membrane. The protein localises to the cytoplasmic vesicle. It is found in the COPI-coated vesicle membrane. Functionally, the coatomer is a cytosolic protein complex that binds to dilysine motifs and reversibly associates with Golgi non-clathrin-coated vesicles, which further mediate biosynthetic protein transport from the ER, via the Golgi up to the trans Golgi network. Coatomer complex is required for budding from Golgi membranes, and is essential for the retrograde Golgi-to-ER transport of dilysine-tagged proteins. The polypeptide is Coatomer subunit beta'-2 (Oryza sativa subsp. japonica (Rice)).